Reading from the N-terminus, the 379-residue chain is Cytochrome b (379 aa).

Transmembrane regions (helical) follow at residues 33–53 (FGSLLGACLTIQVITGLFLAM), 77–98 (WTIRYLHANGASMFFMCLFIHV), 113–133 (WNIGIMLLFSVMATAFMGYVL), and 178–198 (FFALHFILPFIISALAMIHLL). 2 residues coordinate heme b: His83 and His97. 2 residues coordinate heme b: His182 and His196. Position 201 (His201) interacts with a ubiquinone. The next 4 membrane-spanning stretches (helical) occupy residues 226-246 (TKDFLGLLLLILLLMTLTLFY), 288-308 (PGGVVALILSILILAIIPFLQ), 320-340 (LSQFLFWILVADLLTLTWIGG), and 347-367 (FISIGQTASILYFSLMVFIMP).

The protein belongs to the cytochrome b family. As to quaternary structure, the cytochrome bc1 complex contains 11 subunits: 3 respiratory subunits (MT-CYB, CYC1 and UQCRFS1), 2 core proteins (UQCRC1 and UQCRC2) and 6 low-molecular weight proteins (UQCRH/QCR6, UQCRB/QCR7, UQCRQ/QCR8, UQCR10/QCR9, UQCR11/QCR10 and a cleavage product of UQCRFS1). This cytochrome bc1 complex then forms a dimer. The cofactor is heme b.

It localises to the mitochondrion inner membrane. Component of the ubiquinol-cytochrome c reductase complex (complex III or cytochrome b-c1 complex) that is part of the mitochondrial respiratory chain. The b-c1 complex mediates electron transfer from ubiquinol to cytochrome c. Contributes to the generation of a proton gradient across the mitochondrial membrane that is then used for ATP synthesis. The polypeptide is Cytochrome b (MT-CYB) (Lepilemur ruficaudatus (Red-tailed sportive lemur)).